Here is a 298-residue protein sequence, read N- to C-terminus: Elongation factor Ts (298 aa).

The tract at residues Thr79 to Val82 is involved in Mg(2+) ion dislocation from EF-Tu.

The protein belongs to the EF-Ts family.

It is found in the cytoplasm. In terms of biological role, associates with the EF-Tu.GDP complex and induces the exchange of GDP to GTP. It remains bound to the aminoacyl-tRNA.EF-Tu.GTP complex up to the GTP hydrolysis stage on the ribosome. This is Elongation factor Ts from Cereibacter sphaeroides (strain ATCC 17025 / ATH 2.4.3) (Rhodobacter sphaeroides).